Consider the following 272-residue polypeptide: Exosome complex component Rrp42 (272 aa).

It belongs to the RNase PH family. Rrp42 subfamily. Component of the archaeal exosome complex. Forms a hexameric ring-like arrangement composed of 3 Rrp41-Rrp42 heterodimers. The hexameric ring associates with a trimer of Rrp4 and/or Csl4 subunits.

The protein resides in the cytoplasm. Non-catalytic component of the exosome, which is a complex involved in RNA degradation. Contributes to the structuring of the Rrp41 active site. The polypeptide is Exosome complex component Rrp42 (Thermococcus kodakarensis (strain ATCC BAA-918 / JCM 12380 / KOD1) (Pyrococcus kodakaraensis (strain KOD1))).